Reading from the N-terminus, the 445-residue chain is Glycerophosphocholine choline phosphodiesterase ENPP6 (445 aa).

An N-terminal signal peptide occupies residues 1 to 22 (MAGKLGVLLLALVLSLAQPASA). Positions 32, 71, and 92 each coordinate substrate. Asp-32 and Ser-71 together coordinate Zn(2+). Ser-71 (nucleophile) is an active-site residue. Ser-71 carries the post-translational modification Phosphoserine. Asn-100 and Asn-118 each carry an N-linked (GlcNAc...) asparagine glycan. A disulfide bridge connects residues Cys-142 and Cys-154. Asp-193 is a binding site for substrate. Residues Asp-193, His-197, Asp-240, and His-241 each coordinate Zn(2+). Residue His-241 coordinates substrate. Residue Asn-341 is glycosylated (N-linked (GlcNAc...) asparagine). His-356 provides a ligand contact to substrate. His-356 contributes to the Zn(2+) binding site. N-linked (GlcNAc...) asparagine glycosylation is present at Asn-406. The GPI-anchor amidated serine moiety is linked to residue Ser-421. Residues 422–445 (SAPGAPPCACALVTVLLVLLAILA) constitute a propeptide, removed in mature form.

This sequence belongs to the nucleotide pyrophosphatase/phosphodiesterase family. Homodimer; disulfide-linked. Homotetramer. Zn(2+) is required as a cofactor.

It localises to the cell membrane. It carries out the reaction sn-glycerol 3-phosphocholine + H2O = phosphocholine + glycerol + H(+). The enzyme catalyses a 1-acyl-sn-glycero-3-phosphocholine + H2O = a 1-acyl-sn-glycerol + phosphocholine + H(+). The catalysed reaction is a 1-O-alkyl-sn-glycero-3-phosphocholine + H2O = a 1-O-alkyl-sn-glycerol + phosphocholine + H(+). It catalyses the reaction 1-dodecanoyl-sn-glycero-3-phosphocholine + H2O = 1-dodecanoyl-sn-glycerol + phosphocholine + H(+). It carries out the reaction 1-hexadecanoyl-sn-glycero-3-phosphocholine + H2O = 1-hexadecanoyl-sn-glycerol + phosphocholine + H(+). The enzyme catalyses 1-(5Z,8Z,11Z,14Z-eicosatetraenoyl)-sn-glycero-3-phosphocholine + H2O = 1-(5Z,8Z,11Z,14Z-eicosatetraenoyl)-sn-glycerol + phosphocholine + H(+). The catalysed reaction is 1-tetradecanoyl-sn-glycero-3-phosphocholine + H2O = 1-tetradecanoyl-sn-glycerol + phosphocholine + H(+). It catalyses the reaction sphing-4-enine-phosphocholine + H2O = sphing-4-enine + phosphocholine + H(+). It carries out the reaction 1-(9Z-octadecenoyl)-sn-glycero-3-phosphocholine + H2O = 1-(9Z-octadecenoyl)-sn-glycerol + phosphocholine + H(+). The enzyme catalyses 1-(9Z,12Z)-octadecadienoyl-sn-glycero-3-phosphocholine + H2O = 1-(9Z,12Z-octadecadienoyl)-sn-glycerol + phosphocholine + H(+). The catalysed reaction is glycero-2-phosphocholine + H2O = phosphocholine + glycerol + H(+). Its activity is regulated as follows. Inhibited by EDTA and EGTA in vitro. Choline-specific glycerophosphodiesterase that hydrolyzes glycerophosphocholine (GPC) and lysophosphatidylcholine (LPC) and contributes to supplying choline to the cells. Has a preference for LPC with short (12:0 and 14:0) or polyunsaturated (18:2 and 20:4) fatty acids. In vitro, hydrolyzes only choline-containing lysophospholipids, such as sphingosylphosphorylcholine (SPC), platelet-activating factor (PAF) and lysoPAF, but not other lysophospholipids. This chain is Glycerophosphocholine choline phosphodiesterase ENPP6, found in Bos taurus (Bovine).